The following is a 516-amino-acid chain: Membrane-bound transcription factor site-2 protease (516 aa).

Residues 1-3 (MIP) are Cytoplasmic-facing. Residues 4–24 (VSLVVVVVGGWTAVYLTDLVL) form a helical membrane-spanning segment. Over 25–74 (KSSVYFKHSYEDWLENNGLSISPFHIRWQTAVFNRAFYSWGRRKARMLYQ) the chain is Lumenal. Transmembrane regions (helical) follow at residues 75–95 (WFNF…FLLG) and 96–107 (KTLIQTLGQMMA). At 108–141 (DSSYSSSSSSSSHSSSSSSSSSSSSSLYNEQVLQ) the chain is on the lumenal side. A helical membrane pass occupies residues 142–166 (VVVPGINLPVNQLTYFFAAVLISGV). Residue His168 coordinates Zn(2+). Residue Glu169 is part of the active site. 3 helical membrane passes run 171 to 183 (GHGI…QVRF), 184 to 206 (NGFG…TTHL), and 226 to 248 (FILA…PFYY). Position 172 (His172) interacts with Zn(2+). The Lumenal portion of the chain corresponds to 249-443 (TGVGVLITEV…LPVVVETFVK (195 aa)). N-linked (GlcNAc...) asparagine glycosylation occurs at Asn334. Transmembrane regions (helical) follow at residues 444–461 (YLIS…VPCF) and 462–473 (ALDGQWILNSFL). Topologically, residues 474-489 (DATLTSVIGDNDVKDL) are lumenal. Residues 490–510 (IGFFILLGGSILLAANVALGL) traverse the membrane as a helical segment. Residues 511–516 (WMVTAR) lie on the Cytoplasmic side of the membrane.

Belongs to the peptidase M50A family. Zn(2+) serves as cofactor.

Its subcellular location is the membrane. It localises to the cytoplasm. The protein resides in the golgi apparatus membrane. The catalysed reaction is Cleaves several transcription factors that are type-2 transmembrane proteins within membrane-spanning domains. Known substrates include sterol regulatory element-binding protein (SREBP) -1, SREBP-2 and forms of the transcriptional activator ATF6. SREBP-2 is cleaved at the site 477-DRSRILL-|-CVLTFLCLSFNPLTSLLQWGGA-505. The residues Asn-Pro, 11 residues distal to the site of cleavage in the membrane-spanning domain, are important for cleavage by S2P endopeptidase. Replacement of either of these residues does not prevent cleavage, but there is no cleavage if both of these residues are replaced.. In terms of biological role, zinc metalloprotease that mediates intramembrane proteolysis of proteins such as ATF6, ATF6B, SREBF1/SREBP1 and SREBF2/SREBP2. Catalyzes the second step in the proteolytic activation of the sterol regulatory element-binding proteins (SREBPs) SREBF1/SREBP1 and SREBF2/SREBP2: cleaves SREBPs within the first transmembrane segment, thereby releasing the N-terminal segment with a portion of the transmembrane segment attached. Mature N-terminal SREBP fragments shuttle to the nucleus and activate gene transcription. Also mediates the second step in the proteolytic activation of the cyclic AMP-dependent transcription factor ATF-6 (ATF6 and ATF6B). Involved in intramembrane proteolysis during bone formation. In astrocytes and osteoblasts, upon DNA damage and ER stress, mediates the second step of the regulated intramembrane proteolytic activation of the transcription factor CREB3L1, leading to the inhibition of cell-cycle progression. The sequence is that of Membrane-bound transcription factor site-2 protease from Bos taurus (Bovine).